We begin with the raw amino-acid sequence, 688 residues long: Lectin-domain containing receptor kinase VI.3 (688 aa).

An N-terminal signal peptide occupies residues 1–14; it reads MLVLFLLLTIPTRA. Residues 15–306 are Extracellular-facing; the sequence is QRTTTETPKT…KRGYNSQVLA (292 aa). The interval 22–271 is legume-lectin like; that stretch reads PKTEFIFRGF…AHYVMGWSFS (250 aa). Residues 307–327 form a helical membrane-spanning segment; sequence LIVALSGVTVILLALLFFFVM. Over 328–688 the chain is Cytoplasmic; sequence YKKRLQQGEV…VSSSSVISGR (361 aa). The region spanning 361-640 is the Protein kinase domain; the sequence is FKENRIVGTG…LNGDDDVPEI (280 aa). Residues 367–375 and K391 each bind ATP; that span reads VGTGGFGTV. D490 functions as the Proton acceptor in the catalytic mechanism. The disordered stretch occupies residues 662–688; the sequence is VSSDRASSSVPSFSVTRVSSSSVISGR.

In the C-terminal section; belongs to the protein kinase superfamily. Ser/Thr protein kinase family. The protein in the N-terminal section; belongs to the leguminous lectin family.

The protein localises to the cell membrane. The catalysed reaction is L-seryl-[protein] + ATP = O-phospho-L-seryl-[protein] + ADP + H(+). The enzyme catalyses L-threonyl-[protein] + ATP = O-phospho-L-threonyl-[protein] + ADP + H(+). Its function is as follows. Involved in negative regulation of abscisic acid response in seed germination. The polypeptide is Lectin-domain containing receptor kinase VI.3 (LECRK63) (Arabidopsis thaliana (Mouse-ear cress)).